Reading from the N-terminus, the 211-residue chain is Dual specificity protein phosphatase 26 (211 aa).

Residues 60-207 form the Tyrosine-protein phosphatase domain; sequence NHADEVWPGL…LLALDRRLRQ (148 aa). Cysteine 152 functions as the Phosphocysteine intermediate in the catalytic mechanism.

Belongs to the protein-tyrosine phosphatase family. Non-receptor class dual specificity subfamily. Interacts with HSF4.

The protein resides in the cytoplasm. It localises to the nucleus. It is found in the golgi apparatus. It catalyses the reaction O-phospho-L-tyrosyl-[protein] + H2O = L-tyrosyl-[protein] + phosphate. It carries out the reaction O-phospho-L-seryl-[protein] + H2O = L-seryl-[protein] + phosphate. The enzyme catalyses O-phospho-L-threonyl-[protein] + H2O = L-threonyl-[protein] + phosphate. Inactivates MAPK1 and MAPK3 which leads to dephosphorylation of heat shock factor protein 4 and a reduction in its DNA-binding activity. The chain is Dual specificity protein phosphatase 26 (Dusp26) from Rattus norvegicus (Rat).